Consider the following 768-residue polypeptide: Actin filament-associated protein 1-like 1 (768 aa).

The segment at 83–145 is disordered; it reads LRDMSDDGEP…GKSPEYISSH (63 aa). A phosphoserine mark is found at Ser-87, Ser-93, Ser-97, Ser-103, and Ser-153. Positions 165–185 are enriched in polar residues; sequence SYPTTRMNGELKNSYNDSDAM. Positions 165 to 211 are disordered; that stretch reads SYPTTRMNGELKNSYNDSDAMSSSYESYDEEEEEEKGRQPKHQWPSE. Residues 220–316 enclose the PH 1 domain; sequence DCRICAFLLR…WLKVIREVSR (97 aa). Residues Ser-329 and Ser-343 each carry the phosphoserine modification. The span at 340-349 shows a compositional bias: basic and acidic residues; the sequence is KRLSQEKQNS. The tract at residues 340-382 is disordered; that stretch reads KRLSQEKQNSDSDSLGMNDSGSTLGRREACEHGKGKKNSLAEL. Positions 350–362 are enriched in polar residues; the sequence is DSDSLGMNDSGST. One can recognise a PH 2 domain in the interval 418–512; sequence EVPCCGYLNV…WLGLLLVEMG (95 aa). Tyr-557 carries the phosphotyrosine modification. A disordered region spans residues 564–609; it reads KVQDEEPQRPTGAQVKRHASSCSEKSHRADPQVKVKRHASSANQYK. The span at 587 to 596 shows a compositional bias: basic and acidic residues; the sequence is EKSHRADPQV. Residues 611–701 adopt a coiled-coil conformation; it reads GKNRAEEDAR…AVKERLQQSL (91 aa). Residues 705–768 are disordered; it reads PALGLSVSNK…KAKEWEMKKT (64 aa). Positions 710–734 are enriched in polar residues; the sequence is SVSNKNKSQDTTNKPQSNAPEQSLP. Ser-747 bears the Phosphoserine mark. Residues 759–768 are compositionally biased toward basic and acidic residues; the sequence is KAKEWEMKKT.

In terms of assembly, interacts with CTTN.

It is found in the cytoplasm. Its subcellular location is the cell projection. The protein localises to the podosome. It localises to the invadopodium. The protein resides in the cytoskeleton. It is found in the stress fiber. Functionally, may be involved in podosome and invadosome formation. The polypeptide is Actin filament-associated protein 1-like 1 (Afap1l1) (Mus musculus (Mouse)).